The sequence spans 76 residues: RNA-binding protein KhpA (76 aa).

Residues 30–76 (GEVLEVRVNPEDLGRVIGRSGRTAKALRTLVTALADGRRVRVDVVDD) enclose the KH domain.

It belongs to the KhpA RNA-binding protein family.

It localises to the cytoplasm. A probable RNA-binding protein. The sequence is that of RNA-binding protein KhpA from Leifsonia xyli subsp. xyli (strain CTCB07).